Here is a 64-residue protein sequence, read N- to C-terminus: Temporin-ALh (64 aa).

The N-terminal stretch at 1–22 (MFPLKKSLLLLFFLATINLSLC) is a signal peptide. A propeptide spanning residues 23-46 (EQERNAEEERRDEPDERNAEVEKR) is cleaved from the precursor. A Serine amide modification is found at Ser62.

It belongs to the frog skin active peptide (FSAP) family. Temporin subfamily. In terms of tissue distribution, expressed by the skin glands.

Its subcellular location is the secreted. Antimicrobial peptide with activity against Gram-positive and Gram-negative bacteria and against fungi. Has been tested against S.aureus (MIC=2.5 ug/mL), B.pumilus (MIC=7.5 ug/mL), B.cereus (MIC=75.0 ug/mL), E.coli (MIC=5.0 ug/mL), B.dysenteriae (MIC=20.0 ug/mL), A.cacoaceticus (MIC=60.0 ug/mL), P.aeruginosa (MIC=2.5 ug/mL) and C.albicans (MIC=2.5 ug/mL). Also shows a weak hemolytic activity. This chain is Temporin-ALh, found in Amolops loloensis (Lolokou Sucker Frog).